A 123-amino-acid chain; its full sequence is UPF0102 protein Pput_4400 (123 aa).

The protein belongs to the UPF0102 family.

This chain is UPF0102 protein Pput_4400, found in Pseudomonas putida (strain ATCC 700007 / DSM 6899 / JCM 31910 / BCRC 17059 / LMG 24140 / F1).